The following is a 91-amino-acid chain: DNA-directed RNA polymerase subunit omega (91 aa).

This sequence belongs to the RNA polymerase subunit omega family. The RNAP catalytic core consists of 2 alpha, 1 beta, 1 beta' and 1 omega subunit. When a sigma factor is associated with the core the holoenzyme is formed, which can initiate transcription.

It carries out the reaction RNA(n) + a ribonucleoside 5'-triphosphate = RNA(n+1) + diphosphate. Promotes RNA polymerase assembly. Latches the N- and C-terminal regions of the beta' subunit thereby facilitating its interaction with the beta and alpha subunits. This is DNA-directed RNA polymerase subunit omega from Proteus mirabilis (strain HI4320).